Here is a 348-residue protein sequence, read N- to C-terminus: Fructose-1,6-bisphosphatase class 1 (348 aa).

Positions 92, 111, 113, and 114 each coordinate Mg(2+). Substrate is bound by residues 114-117 (DGSS) and Asn204. Glu276 is a Mg(2+) binding site.

Belongs to the FBPase class 1 family. As to quaternary structure, homotetramer. The cofactor is Mg(2+).

The protein localises to the cytoplasm. The catalysed reaction is beta-D-fructose 1,6-bisphosphate + H2O = beta-D-fructose 6-phosphate + phosphate. It functions in the pathway carbohydrate biosynthesis; gluconeogenesis. This chain is Fructose-1,6-bisphosphatase class 1, found in Methylorubrum extorquens (strain PA1) (Methylobacterium extorquens).